The primary structure comprises 721 residues: 1,4-alpha-glucan branching enzyme GlgB (721 aa).

Catalysis depends on Asp-400, which acts as the Nucleophile. Catalysis depends on Glu-453, which acts as the Proton donor.

This sequence belongs to the glycosyl hydrolase 13 family. GlgB subfamily. In terms of assembly, monomer.

The enzyme catalyses Transfers a segment of a (1-&gt;4)-alpha-D-glucan chain to a primary hydroxy group in a similar glucan chain.. It participates in glycan biosynthesis; glycogen biosynthesis. Functionally, catalyzes the formation of the alpha-1,6-glucosidic linkages in glycogen by scission of a 1,4-alpha-linked oligosaccharide from growing alpha-1,4-glucan chains and the subsequent attachment of the oligosaccharide to the alpha-1,6 position. The sequence is that of 1,4-alpha-glucan branching enzyme GlgB from Chlamydia felis (strain Fe/C-56) (Chlamydophila felis).